The sequence spans 278 residues: Poly(3-hydroxyoctanoate) depolymerase (278 aa).

A signal peptide spans 1–33; it reads MPLRTLLCGLLLAVCLGQHALAASRCSERPRTL.

Its subcellular location is the secreted. The catalysed reaction is Hydrolyzes the polyester poly{oxycarbonyl[(R)-2-pentylethylene]} to oligomers.. Its function is as follows. Hydrolysis of poly(3-hydroxyoctanoic acid). This is Poly(3-hydroxyoctanoate) depolymerase (phaZ) from Pseudomonas fluorescens.